We begin with the raw amino-acid sequence, 359 residues long: Peptide chain release factor 1 (359 aa).

Gln-236 carries the N5-methylglutamine modification. The tract at residues 288–307 (QDEQDAERKSTIGTGDRSER) is disordered. Basic and acidic residues predominate over residues 293–307 (AERKSTIGTGDRSER).

Belongs to the prokaryotic/mitochondrial release factor family. Post-translationally, methylated by PrmC. Methylation increases the termination efficiency of RF1.

Its subcellular location is the cytoplasm. Functionally, peptide chain release factor 1 directs the termination of translation in response to the peptide chain termination codons UAG and UAA. This chain is Peptide chain release factor 1, found in Streptococcus sanguinis (strain SK36).